Reading from the N-terminus, the 963-residue chain is VPS35 endosomal protein-sorting factor-like (963 aa).

Residues 43–69 (SKTKKVNRKGSTSSTSSSSSSSVVDPL) are disordered. Residues 53–69 (STSSTSSSSSSSVVDPL) show a composition bias toward low complexity. A Phosphoserine modification is found at serine 265. The chain crosses the membrane as a helical span at residues 703–719 (ACVAYCFITIPSLAGIF).

Belongs to the VPS35L family. Component of the heterotrimeric retriever complex formed by VPS26C, VPS29 and VPS35L. Interacts with VPS29. Interacts with COMMD1, CCDC93 and CCDC22; associates with the CCC (COMMD/CCDC22/CCDC93) complex which contains at least COMMD1 (and possibly other COMM domain-containing proteins), CCDC22 and CCDC93. Interacts with WASHC1, WASHC2A and WASHC2C. Interacts with SNX17 and SNX31.

It is found in the membrane. It localises to the endosome. In terms of biological role, acts as a component of the retriever complex. The retriever complex is a heterotrimeric complex related to retromer cargo-selective complex (CSC) and essential for retromer-independent retrieval and recycling of numerous cargos such as integrin alpha-5/beta-1 (ITGA5:ITGB1). The recruitment of the retriever complex to the endosomal membrane involves CCC and WASH complexes. In the endosomes, drives the retrieval and recycling of NxxY-motif-containing cargo proteins by coupling to SNX17, a cargo essential for the homeostatic maintenance of numerous cell surface proteins associated with processes that include cell migration, cell adhesion, nutrient supply and cell signaling. Involved in copper-dependent ATP7A trafficking between the trans-Golgi network and vesicles in the cell periphery; the function is proposed to depend on its association with the CCC complex and cooperation with the WASH complex on early endosomes. Seems not to be required for CCC complex stability. Its function is as follows. (Microbial infection) The heterotrimeric retriever complex, in collaboration with the CCC complex, mediates the exit of human papillomavirus to the cell surface. This Homo sapiens (Human) protein is VPS35 endosomal protein-sorting factor-like.